The following is a 1594-amino-acid chain: Transcription factor Gibbin (1594 aa).

Disordered stretches follow at residues 19–111 (PDYL…RHWD), 149–241 (LRLS…LADA), 256–307 (QLLE…DPLG), and 367–464 (CSPH…RKGK). The span at 30–47 (GGPPTPRPLLPTRPPASP) shows a compositional bias: pro residues. Lys79 carries the N6-acetyllysine modification. The segment covering 165–177 (SFFSSPSLANSIR) has biased composition (polar residues). The segment covering 178–193 (SPEERANPHTKSERPS) has biased composition (basic and acidic residues). Residues 228-240 (PEPDGPDYSELAD) show a composition bias toward acidic residues. Ser267 bears the Phosphoserine mark. Residues 272-303 (PQLLDPQPRFLDPQALEPLGEGLELPPLQPLA) show a composition bias toward low complexity. The span at 391-401 (ILCRRRKAGRG) shows a compositional bias: basic residues. Residues 395 to 407 (RRKAGRGRKADSG) constitute a DNA-binding region (a.T hook 1). Residues 427 to 447 (EPPPLPPPPPPTLSGPGPVPE) are compositionally biased toward pro residues. Positions 541–553 (KRKRGRPPKNLLL) form a DNA-binding region, a.T hook 2. Positions 578–604 (MPEVKKRRRRKQKLASPQPSYAADAND) are disordered. Position 593 is a phosphoserine (Ser593). Residue Lys606 forms a Glycyl lysine isopeptide (Lys-Gly) (interchain with G-Cter in SUMO2) linkage. A disordered region spans residues 714 to 789 (LTELGHPRKR…PGGQAGRNCG (76 aa)). The span at 734–743 (KPKRKRRSRK) shows a compositional bias: basic residues. A phosphoserine mark is found at Ser825 and Ser842. The residue at position 887 (Arg887) is an Omega-N-methylarginine. Position 892 is a phosphoserine (Ser892). Residues 942 to 967 (KLAPPPSAVARSPTTHPPANTYPPQY) are disordered. Phosphoserine is present on Ser1060. Disordered stretches follow at residues 1152–1191 (VSET…QSSL) and 1245–1306 (STSA…PDLG). Composition is skewed to low complexity over residues 1153–1168 (SETF…QFSQ), 1180–1191 (SEASSSEGQSSL), and 1245–1264 (STSA…PRQP). Ser1180 is modified (phosphoserine). Residues Ser1315, Ser1317, and Ser1392 each carry the phosphoserine modification. A Phosphothreonine modification is found at Thr1394. Phosphoserine is present on Ser1396. Lys1402 participates in a covalent cross-link: Glycyl lysine isopeptide (Lys-Gly) (interchain with G-Cter in SUMO2). The disordered stretch occupies residues 1495 to 1525 (HLASPPATPKADKEPLEMARPPGPPRGPAAA). Residues Ser1498 and Ser1540 each carry the phosphoserine modification.

It localises to the nucleus. The protein resides in the chromosome. Transcription factor required for the proper patterning of the epidermis, which plays a key role in early epithelial morphogenesis. Directly binds promoter and enhancer regions and acts by maintaining local enhancer-promoter chromatin architecture. Interacts with many sequence-specific zinc-finger transcription factors and methyl-CpG-binding proteins to regulate the expression of mesoderm genes that wire surface ectoderm stratification. This chain is Transcription factor Gibbin, found in Mus musculus (Mouse).